Here is a 279-residue protein sequence, read N- to C-terminus: Threonylcarbamoyl-AMP synthase (279 aa).

A mitochondrion-targeting transit peptide spans 1 to 55 (MSPARRCRGMRAAVAASVGLSEGPAGSRSGRLFRPPSPAPAAPGARLLRLPGSGA). Residues 21–41 (SEGPAGSRSGRLFRPPSPAPA) are disordered. Serine 60 is subject to Phosphoserine. Residues 67-257 (TEALRAAVAE…KFGIIRPGCA (191 aa)) enclose the YrdC-like domain.

The protein belongs to the SUA5 family. Interacts with RSC1A1. In terms of tissue distribution, ubiquitously expressed.

The protein localises to the cytoplasm. The protein resides in the mitochondrion. Its subcellular location is the cell membrane. The catalysed reaction is L-threonine + hydrogencarbonate + ATP = L-threonylcarbamoyladenylate + diphosphate + H2O. Functionally, cytoplasmic and mitochondrial threonylcarbamoyl-AMP synthase required for the formation of a threonylcarbamoyl group on adenosine at position 37 (t(6)A37) in tRNAs that read codons beginning with adenine. Catalyzes the conversion of L-threonine, HCO(3)(-)/CO(2) and ATP to give threonylcarbamoyl-AMP (TC-AMP) as the acyladenylate intermediate, with the release of diphosphate. Participates in t(6)A37 formation in cytoplasmic and mitochondrial tRNAs. May regulate the activity of some transporters. In Homo sapiens (Human), this protein is Threonylcarbamoyl-AMP synthase.